A 192-amino-acid polypeptide reads, in one-letter code: Amelogenin, Y isoform (192 aa).

Residues 1–16 form the signal peptide; that stretch reads MGTWILFACLLGAAYS. Positions 73-192 are disordered; that stretch reads QSPQNHALQP…TDKTKREEVD (120 aa). Residues 87 to 105 show a composition bias toward low complexity; sequence PMVPAQQPVVPQQPMMPVP. The span at 108 to 117 shows a compositional bias: polar residues; it reads HSMTPIQHHQ. A compositionally biased stretch (pro residues) spans 132–173; sequence PIQPQPHQPLQPQPPVHPIQRLPPQPPLPPIFPMQPLPPVLP.

Belongs to the amelogenin family.

It is found in the secreted. It localises to the extracellular space. The protein resides in the extracellular matrix. In terms of biological role, plays a role in the biomineralization of teeth. Seems to regulate the formation of crystallites during the secretory stage of tooth enamel development. Thought to play a major role in the structural organization and mineralization of developing enamel. This chain is Amelogenin, Y isoform (AMELY), found in Bos taurus (Bovine).